Consider the following 406-residue polypeptide: Uronyl 2-sulfotransferase (406 aa).

Residues 1–49 lie on the Cytoplasmic side of the membrane; the sequence is MKKKQQHPGGGADPWPHGAPMGGAPPGLGSWKRRVPLLPFLRFSLRDYG. The chain crosses the membrane as a helical; Signal-anchor for type II membrane protein span at residues 50 to 70; that stretch reads FCMATLLVFCLGSLLYQLSGG. Residues 71–406 lie on the Lumenal side of the membrane; it reads PPRFLLDLRQ…EKWLEDIYKR (336 aa). Residues Asn84, Asn140, and Asn155 are each glycosylated (N-linked (GlcNAc...) asparagine). The active site involves His168. N-linked (GlcNAc...) asparagine glycans are attached at residues Asn173 and Asn319. Acidic residues predominate over residues 387 to 399; sequence EPIDDEEQDDEKW. The segment at 387 to 406 is disordered; it reads EPIDDEEQDDEKWLEDIYKR.

Belongs to the sulfotransferase 3 family. In terms of tissue distribution, widely expressed.

The protein resides in the golgi apparatus membrane. Sulfotransferase that catalyzes the transfer of sulfate to the position 2 of uronyl residues in glycosaminoglycan chains. Has mainly activity toward iduronyl residues in dermatan sulfate, and weaker activity toward glucuronyl residues of chondroitin sulfate. Has little to no activity toward desulfated N-resulfated heparin or N-sulfoheparosan. In Homo sapiens (Human), this protein is Uronyl 2-sulfotransferase.